We begin with the raw amino-acid sequence, 590 residues long: Neuronal PAS domain-containing protein 1 (590 aa).

The bHLH domain maps to 45 to 98; it reads QRKEKSRNAARSRRGKENLEFFELAKLLPLPGAISSQLDKASIVRLSVTYLRLR. In terms of domain architecture, PAS 1 spans 135–207; the sequence is EQHLGGHILQ…LGLRTPTPGP (73 aa). Positions 198–229 are disordered; it reads LGLRTPTPGPPTPPSVSSSSSSSSSLADTPEI. A compositionally biased stretch (low complexity) spans 212–222; the sequence is SVSSSSSSSSS. A PAS 2 domain is found at 293-359; it reads APLAELPLHG…IRQSHVDLLD (67 aa). Residues 365–408 enclose the PAC domain; that stretch reads TGYYRWLQRAGGFVWLQSVATVAGSGKSPGEHHVLWVSHVLSQA. A disordered region spans residues 425–494; it reads ACEEASSPGP…SHPATPRPEF (70 aa). Over residues 433–442 the composition is skewed to pro residues; that stretch reads GPEPTEPEPP. Residues 463 to 476 show a composition bias toward basic and acidic residues; that stretch reads IKVEPGPRETKGSE.

Efficient DNA binding requires dimerization with another bHLH protein. Interacts with ARNT; forms a heterodimer that binds core DNA sequence 5'-[AG]CGTG-3' within the hypoxia response element (HRE) leading to a transcriptional repressor on its target gene TH.

Its subcellular location is the nucleus. Functionally, may control regulatory pathways relevant to schizophrenia and to psychotic illness. May play a role in late central nervous system development by modulating EPO expression in response to cellular oxygen level. Forms a heterodimer that binds core DNA sequence 5'-TACGTG-3' within the hypoxia response element (HRE) leading to transcriptional repression on its target gene TH. The chain is Neuronal PAS domain-containing protein 1 (NPAS1) from Homo sapiens (Human).